The primary structure comprises 499 residues: Increased recombination centers protein 15 (499 aa).

47–56 (DQRASLGGAY) contacts FAD.

The protein belongs to the class-I pyridine nucleotide-disulfide oxidoreductase family.

It is found in the cytoplasm. The protein is Increased recombination centers protein 15 (IRC15) of Saccharomyces cerevisiae (strain ATCC 204508 / S288c) (Baker's yeast).